The sequence spans 160 residues: MIDLGVSKIALIGAVALIVIGPEKLPRVARTVGTLLGKAQRYVADVKQEVNRSMELDELKKMKDTVEGAARDVETSIQTSASDFEKSWSDATGSDASTATDELPGMVVFPEYKHPKKNWRLKTGATPQWYKARSGVRTKAQSGAARVARFRPQSGRSSSF.

The helical transmembrane segment at Met1–Gly21 threads the bilayer. Disordered regions lie at residues Ala70–Thr100 and Arg133–Phe160. The span at Ser89–Thr100 shows a compositional bias: polar residues.

The protein belongs to the TatB family. As to quaternary structure, the Tat system comprises two distinct complexes: a TatABC complex, containing multiple copies of TatA, TatB and TatC subunits, and a separate TatA complex, containing only TatA subunits. Substrates initially bind to the TatABC complex, which probably triggers association of the separate TatA complex to form the active translocon.

The protein resides in the cell inner membrane. Functionally, part of the twin-arginine translocation (Tat) system that transports large folded proteins containing a characteristic twin-arginine motif in their signal peptide across membranes. Together with TatC, TatB is part of a receptor directly interacting with Tat signal peptides. TatB may form an oligomeric binding site that transiently accommodates folded Tat precursor proteins before their translocation. The sequence is that of Sec-independent protein translocase protein TatB from Polaromonas sp. (strain JS666 / ATCC BAA-500).